The primary structure comprises 1171 residues: WD repeat-containing protein on Y chromosome (1171 aa).

8 WD repeats span residues 157 to 201 (EIPE…LRSA), 331 to 370 (RIPL…EPSA), 374 to 413 (GHNG…LLQT), 464 to 503 (THAA…RKII), 516 to 555 (IIDI…VVRN), 603 to 643 (FHTD…RRYN), 748 to 787 (KVGD…IPQA), and 831 to 870 (GHLK…LGTL). The interval 1076-1171 (RTSFTLSDYT…TNTMKSSNSH (96 aa)) is disordered. Composition is skewed to polar residues over residues 1094–1106 (SSRN…SSGS) and 1161–1171 (KTNTMKSSNSH).

This is WD repeat-containing protein on Y chromosome from Drosophila grimshawi (Hawaiian fruit fly).